The chain runs to 94 residues: Sucrose operon repressor (94 aa).

One can recognise an HTH lacI-type domain in the interval 1–56 (MASLHDVARLAGVSKSTVSRVINDEYGVKEATKQKVRQAVAECGYVPNQVAKDLKE). Positions 4-23 (LHDVARLAGVSKSTVSRVIN) form a DNA-binding region, H-T-H motif.

Its function is as follows. Repressor for the scr operon. Binds D-fructose as an inducer. This Vibrio alginolyticus protein is Sucrose operon repressor (scrR).